The sequence spans 354 residues: Thiamine thiazole synthase 1, chloroplastic (354 aa).

A chloroplast-targeting transit peptide spans 1 to 43; that stretch reads MATTAASSLLKSSFAGSRLPSATRAPSSVVVSTGGAPRTAAIS. Residues Ala96, 116-117, Gly124, and Val190 contribute to the substrate site; that span reads EQ. A 2,3-didehydroalanine (Cys) modification is found at Cys219. Residues Asp221, His236, Met288, and 298 to 300 each bind substrate; that span reads RMG.

It belongs to the THI4 family. As to quaternary structure, homooctamer. The cofactor is Fe cation. In terms of processing, during the catalytic reaction, a sulfide is transferred from Cys-219 to a reaction intermediate, generating a dehydroalanine residue.

It localises to the plastid. It is found in the chloroplast. The enzyme catalyses [ADP-thiazole synthase]-L-cysteine + glycine + NAD(+) = [ADP-thiazole synthase]-dehydroalanine + ADP-5-ethyl-4-methylthiazole-2-carboxylate + nicotinamide + 3 H2O + 2 H(+). Involved in biosynthesis of the thiamine precursor thiazole. Catalyzes the conversion of NAD and glycine to adenosine diphosphate 5-(2-hydroxyethyl)-4-methylthiazole-2-carboxylic acid (ADT), an adenylated thiazole intermediate. The reaction includes an iron-dependent sulfide transfer from a conserved cysteine residue of the protein to a thiazole intermediate. The enzyme can only undergo a single turnover, which suggests it is a suicide enzyme. May have additional roles in adaptation to various stress conditions and in DNA damage tolerance. The polypeptide is Thiamine thiazole synthase 1, chloroplastic (Sorghum bicolor (Sorghum)).